We begin with the raw amino-acid sequence, 260 residues long: Eukaryotic translation initiation factor 3 subunit G-2 (260 aa).

The region spanning 180–258 is the RRM domain; sequence CAVRISNLSE…LILSVEWSKP (79 aa).

It belongs to the eIF-3 subunit G family. As to quaternary structure, component of the eukaryotic translation initiation factor 3 (eIF-3) complex. The eIF-3 complex interacts with pix.

It is found in the cytoplasm. Its function is as follows. RNA-binding component of the eukaryotic translation initiation factor 3 (eIF-3) complex, which is involved in protein synthesis of a specialized repertoire of mRNAs and, together with other initiation factors, stimulates binding of mRNA and methionyl-tRNAi to the 40S ribosome. The eIF-3 complex specifically targets and initiates translation of a subset of mRNAs involved in cell proliferation. This subunit can bind 18S rRNA. This chain is Eukaryotic translation initiation factor 3 subunit G-2, found in Drosophila grimshawi (Hawaiian fruit fly).